The following is a 265-amino-acid chain: Hydroxyethylthiazole kinase (265 aa).

Met-44 contacts substrate. ATP-binding residues include Lys-120 and Thr-166. Position 193 (Gly-193) interacts with substrate.

It belongs to the Thz kinase family. Mg(2+) is required as a cofactor.

It catalyses the reaction 5-(2-hydroxyethyl)-4-methylthiazole + ATP = 4-methyl-5-(2-phosphooxyethyl)-thiazole + ADP + H(+). It participates in cofactor biosynthesis; thiamine diphosphate biosynthesis; 4-methyl-5-(2-phosphoethyl)-thiazole from 5-(2-hydroxyethyl)-4-methylthiazole: step 1/1. In terms of biological role, catalyzes the phosphorylation of the hydroxyl group of 4-methyl-5-beta-hydroxyethylthiazole (THZ). In Clostridium novyi (strain NT), this protein is Hydroxyethylthiazole kinase.